The following is a 22-amino-acid chain: Mu-conotoxin CnIIIC (22 aa).

Gln-1 is subject to Pyrrolidone carboxylic acid; partial. 3 disulfide bridges follow: Cys-3/Cys-15, Cys-4/Cys-21, and Cys-10/Cys-22. Cys-22 bears the Cysteine amide mark.

It belongs to the conotoxin M superfamily. Expressed by the venom duct.

It localises to the secreted. Functionally, mu-conotoxins block voltage-gated sodium channels (Nav). This synthetic toxin blocks both voltage-gated sodium channels and nicotinic acetylcholine receptor (nAChR). Inhibits the skeletal muscle rNav1.4/SCN4A (IC(50)=1.3 nM) and the brain rNav1.2/SCN2A in a long-lasting manner. A low inhibition is also observed on neuronal mNav1.6/SCN8A and mNav1.7/SCN9A. Modestly blocks nAChR alpha-3/beta-2 subtype (IC(50)=450 nM) (partially reversible) and, to a lesser extent, alpha-7 and alpha-4/beta-2 subtypes (reversible). In vitro, decreases twitch tension in mouse hemidiaphragms (IC(50)=150 nM), and displays a high blocking effect in mouse extensor digitorum longus muscles (IC(50)=46 nM). The protein is Mu-conotoxin CnIIIC of Conus consors (Singed cone).